The chain runs to 279 residues: Dehydrogenase/reductase SDR family member 4 (279 aa).

37 to 61 (LVTASTDGIGLAIARRLAEDGAHVV) serves as a coordination point for NADP(+). Position 93 is an N6-acetyllysine; alternate (Lys93). At Lys93 the chain carries N6-succinyllysine; alternate. N6-acetyllysine is present on Lys106. Position 170 (Ser170) interacts with substrate. Tyr183 (proton acceptor) is an active-site residue. Lys187 is an NADP(+) binding site. N6-acetyllysine; alternate is present on Lys217. Lys217 is subject to N6-succinyllysine; alternate. Phosphoserine is present on Ser221. An N6-succinyllysine mark is found at Lys228 and Lys235. A Peroxisomal targeting signal motif is present at residues 277–279 (SRL).

This sequence belongs to the short-chain dehydrogenases/reductases (SDR) family. In terms of assembly, homotetramer.

The protein resides in the peroxisome. The catalysed reaction is a secondary alcohol + NADP(+) = a ketone + NADPH + H(+). It carries out the reaction 3alpha-hydroxy-5beta-pregnan-20-one + NADP(+) = 5beta-pregnan-3,20-dione + NADPH + H(+). The enzyme catalyses 5beta-dihydrotestosterone + NADPH + H(+) = 5beta-androstane-3alpha,17beta-diol + NADP(+). It catalyses the reaction all-trans-retinol + NADP(+) = all-trans-retinal + NADPH + H(+). The catalysed reaction is isatin + NADPH + H(+) = 3-hydroxyindolin-2-one + NADP(+). Its function is as follows. NADPH-dependent oxidoreductase which catalyzes the reduction of a variety of compounds bearing carbonyl groups including ketosteroids, alpha-dicarbonyl compounds, aldehydes, aromatic ketones and quinones. Reduces all-trans-retinal and 9-cis retinal. Reduces 3-ketosteroids and benzil into 3alpha-hydroxysteroids and S-benzoin, respectively, in contrast to the stereoselectivity of primates DHRS4s which produce 3beta-hydroxysteroids and R-benzoin. In the reverse reaction, catalyzes the NADP-dependent oxidation of 3alpha-hydroxysteroids and alcohol, but with much lower efficiency. Involved in the metabolism of 3alpha-hydroxysteroids, retinoid, isatin and xenobiotic carbonyl compounds. The sequence is that of Dehydrogenase/reductase SDR family member 4 (Dhrs4) from Rattus norvegicus (Rat).